Here is a 500-residue protein sequence, read N- to C-terminus: L-arabinose isomerase (500 aa).

Positions 306, 333, 350, and 450 each coordinate Mn(2+).

This sequence belongs to the arabinose isomerase family. As to quaternary structure, homohexamer. The cofactor is Mn(2+).

The enzyme catalyses beta-L-arabinopyranose = L-ribulose. The protein operates within carbohydrate degradation; L-arabinose degradation via L-ribulose; D-xylulose 5-phosphate from L-arabinose (bacterial route): step 1/3. Functionally, catalyzes the conversion of L-arabinose to L-ribulose. The sequence is that of L-arabinose isomerase from Shigella flexneri serotype 5b (strain 8401).